Here is a 596-residue protein sequence, read N- to C-terminus: Elongation factor 4 (596 aa).

In terms of domain architecture, tr-type G spans lysine 2–glutamate 184. GTP contacts are provided by residues aspartate 14 to threonine 19 and asparagine 131 to aspartate 134.

Belongs to the TRAFAC class translation factor GTPase superfamily. Classic translation factor GTPase family. LepA subfamily.

Its subcellular location is the cell inner membrane. It catalyses the reaction GTP + H2O = GDP + phosphate + H(+). Its function is as follows. Required for accurate and efficient protein synthesis under certain stress conditions. May act as a fidelity factor of the translation reaction, by catalyzing a one-codon backward translocation of tRNAs on improperly translocated ribosomes. Back-translocation proceeds from a post-translocation (POST) complex to a pre-translocation (PRE) complex, thus giving elongation factor G a second chance to translocate the tRNAs correctly. Binds to ribosomes in a GTP-dependent manner. The protein is Elongation factor 4 of Shewanella amazonensis (strain ATCC BAA-1098 / SB2B).